The sequence spans 413 residues: Multifunctional CCA protein (413 aa).

ATP is bound by residues Gly8 and Arg11. Positions 8 and 11 each coordinate CTP. Positions 21 and 23 each coordinate Mg(2+). Residues Arg91, Arg143, and Arg146 each contribute to the ATP site. Residues Arg91, Arg143, and Arg146 each contribute to the CTP site. Residues 232 to 333 (TGVHVMMVVD…VRLFERSDAL (102 aa)) enclose the HD domain.

Belongs to the tRNA nucleotidyltransferase/poly(A) polymerase family. Bacterial CCA-adding enzyme type 1 subfamily. Monomer. Can also form homodimers and oligomers. Mg(2+) is required as a cofactor. It depends on Ni(2+) as a cofactor.

The catalysed reaction is a tRNA precursor + 2 CTP + ATP = a tRNA with a 3' CCA end + 3 diphosphate. It catalyses the reaction a tRNA with a 3' CCA end + 2 CTP + ATP = a tRNA with a 3' CCACCA end + 3 diphosphate. Functionally, catalyzes the addition and repair of the essential 3'-terminal CCA sequence in tRNAs without using a nucleic acid template. Adds these three nucleotides in the order of C, C, and A to the tRNA nucleotide-73, using CTP and ATP as substrates and producing inorganic pyrophosphate. tRNA 3'-terminal CCA addition is required both for tRNA processing and repair. Also involved in tRNA surveillance by mediating tandem CCA addition to generate a CCACCA at the 3' terminus of unstable tRNAs. While stable tRNAs receive only 3'-terminal CCA, unstable tRNAs are marked with CCACCA and rapidly degraded. The polypeptide is Multifunctional CCA protein (Burkholderia cenocepacia (strain HI2424)).